The sequence spans 78 residues: Dermaseptin-B1 (78 aa).

The N-terminal stretch at 1–22 (MDILKKSLFLVLFLGLVSLSIC) is a signal peptide. A propeptide spanning residues 23–42 (EEEKRENEDEEKQDDEQSEM) is cleaved from the precursor. Position 75 is a glutamine amide (Gln75). A propeptide spanning residues 76-78 (GEQ) is cleaved from the precursor.

This sequence belongs to the frog skin active peptide (FSAP) family. Dermaseptin subfamily. Expressed by the skin glands.

It is found in the secreted. Possesses a potent antimicrobial activity against bacteria, fungi and protozoa. Probably acts by disturbing membrane functions with its amphipathic structure. The polypeptide is Dermaseptin-B1 (Phyllomedusa bicolor (Two-colored leaf frog)).